A 130-amino-acid polypeptide reads, in one-letter code: Large-conductance mechanosensitive channel (130 aa).

The next 2 membrane-spanning stretches (helical) occupy residues 11-31 (FALKGNVLDLAVAVVIGAAFG) and 70-90 (GAFIQSIVDFIIIAFAIFIFV).

It belongs to the MscL family. In terms of assembly, homopentamer.

It localises to the cell membrane. Functionally, channel that opens in response to stretch forces in the membrane lipid bilayer. May participate in the regulation of osmotic pressure changes within the cell. The sequence is that of Large-conductance mechanosensitive channel from Listeria welshimeri serovar 6b (strain ATCC 35897 / DSM 20650 / CCUG 15529 / CIP 8149 / NCTC 11857 / SLCC 5334 / V8).